The following is a 492-amino-acid chain: MAVLLETTLGDVVIDLYTEERPRACLNFLKLCKIKYYNYCLIHNVQRDFIIQTGDPTGTGRGGESIFGQLYGDQASFFEAEKVPRIKHKKKGTVSMVNNGSDQHGSQFLITTGENLDYLDGVHTVFGEVTEGMDIVKKINETFVDKDFVPYQDIRINHTVILDDPFDDPPDLLIPDRSPEPTKEQLDSGRIGADEEIDDFKGRSAEEVEEIKAEKEAKTQAILLEMVGDLPDADIKPPENVLFVCKLNPVTTDEDLEIIFSRFGPIRSCEVIRDWKTGESLCYAFIEFEKEEDCEKAFFKMDNVLIDDRRIHVDFSQSVAKVKWKGKGGKYTKSDFKEYEKEQDKPANLVLKEKVKPKQDAKYDLILDEQGEDSKSSHSHTSKKHKKKTRHCSEEKEDEEYMPIKNPNQDIYREMGFGHYEEEESCWEKQKNEKRDRRQNRSRSRSRERDGHYSNSHKPKYQTEPYERERSRKRDRSRSPKKSKAKEKSKYR.

The region spanning 1-161 is the PPIase cyclophilin-type domain; it reads MAVLLETTLG…QDIRINHTVI (161 aa). The disordered stretch occupies residues 167–188; that stretch reads DDPPDLLIPDRSPEPTKEQLDS. Residues 177 to 187 show a composition bias toward basic and acidic residues; sequence RSPEPTKEQLD. Ser178 carries the post-translational modification Phosphoserine. Thr182 is modified (phosphothreonine). Glycyl lysine isopeptide (Lys-Gly) (interchain with G-Cter in SUMO2) cross-links involve residues Lys201, Lys212, and Lys218. Residues 240-318 enclose the RRM domain; that stretch reads NVLFVCKLNP…RRIHVDFSQS (79 aa). Residues Lys321 and Lys362 each participate in a glycyl lysine isopeptide (Lys-Gly) (interchain with G-Cter in SUMO2) cross-link. 2 disordered regions span residues 368-409 and 423-492; these read DEQG…NPNQ and EESC…SKYR. Basic residues predominate over residues 377–390; it reads SHSHTSKKHKKKTR. Ser393 carries the phosphoserine modification. Lys405 is covalently cross-linked (Glycyl lysine isopeptide (Lys-Gly) (interchain with G-Cter in SUMO2)). Basic and acidic residues predominate over residues 426–436; it reads CWEKQKNEKRD. Lys460 is covalently cross-linked (Glycyl lysine isopeptide (Lys-Gly) (interchain with G-Cter in SUMO2)). Phosphoserine is present on Ser471. The span at 473–485 shows a compositional bias: basic residues; sequence KRDRSRSPKKSKA.

This sequence belongs to the cyclophilin-type PPIase family. PPIL4 subfamily.

It localises to the nucleus. The catalysed reaction is [protein]-peptidylproline (omega=180) = [protein]-peptidylproline (omega=0). Its function is as follows. PPIases accelerate the folding of proteins. It catalyzes the cis-trans isomerization of proline imidic peptide bonds in oligopeptides. The sequence is that of Peptidyl-prolyl cis-trans isomerase-like 4 (Ppil4) from Mus musculus (Mouse).